Here is a 322-residue protein sequence, read N- to C-terminus: Phospho-N-acetylmuramoyl-pentapeptide-transferase (322 aa).

10 helical membrane passes run 6–26, 54–74, 82–102, 122–142, 145–165, 176–196, 200–220, 227–247, 255–275, and 302–322; these read ASCI…PLLI, TMGG…VTAW, VWIL…DDGI, IIIA…FGLY, FAGV…WLVG, LDGL…YIAF, NFAI…FFIF, IFMG…VSIM, LLVG…VISF, and VDIV…AIWG.

The protein belongs to the glycosyltransferase 4 family. MraY subfamily. Mg(2+) is required as a cofactor.

It is found in the cell membrane. It catalyses the reaction UDP-N-acetyl-alpha-D-muramoyl-L-alanyl-gamma-D-glutamyl-L-lysyl-D-alanyl-D-alanine + di-trans,octa-cis-undecaprenyl phosphate = Mur2Ac(oyl-L-Ala-gamma-D-Glu-L-Lys-D-Ala-D-Ala)-di-trans,octa-cis-undecaprenyl diphosphate + UMP. It functions in the pathway cell wall biogenesis; peptidoglycan biosynthesis. In terms of biological role, catalyzes the initial step of the lipid cycle reactions in the biosynthesis of the cell wall peptidoglycan: transfers peptidoglycan precursor phospho-MurNAc-pentapeptide from UDP-MurNAc-pentapeptide onto the lipid carrier undecaprenyl phosphate, yielding undecaprenyl-pyrophosphoryl-MurNAc-pentapeptide, known as lipid I. The protein is Phospho-N-acetylmuramoyl-pentapeptide-transferase of Lactobacillus helveticus (strain DPC 4571).